Consider the following 255-residue polypeptide: Taurine import ATP-binding protein TauB (255 aa).

An ABC transporter domain is found at 2–229; that stretch reads LNVSGLWAEY…RYAEGEPCRA (228 aa). 34 to 41 is a binding site for ATP; it reads GPSGCGKT.

The protein belongs to the ABC transporter superfamily. Taurine importer (TC 3.A.1.17.1) family. The complex is composed of two ATP-binding proteins (TauB), two transmembrane proteins (TauC) and a solute-binding protein (TauA).

It localises to the cell inner membrane. The enzyme catalyses taurine(out) + ATP + H2O = taurine(in) + ADP + phosphate + H(+). Part of the ABC transporter complex TauABC involved in taurine import. Responsible for energy coupling to the transport system. The protein is Taurine import ATP-binding protein TauB of Yersinia pseudotuberculosis serotype I (strain IP32953).